The sequence spans 304 residues: tRNA pseudouridine synthase B (304 aa).

Asp-48 serves as the catalytic Nucleophile.

It belongs to the pseudouridine synthase TruB family. Type 1 subfamily.

It catalyses the reaction uridine(55) in tRNA = pseudouridine(55) in tRNA. In terms of biological role, responsible for synthesis of pseudouridine from uracil-55 in the psi GC loop of transfer RNAs. This chain is tRNA pseudouridine synthase B, found in Pseudomonas aeruginosa (strain UCBPP-PA14).